A 433-amino-acid polypeptide reads, in one-letter code: Glutamyl-tRNA reductase (433 aa).

Residues 49-52 (TCNR), Ser109, 114-116 (EGQ), and Gln120 contribute to the substrate site. Residue Cys50 is the Nucleophile of the active site. Residue 189–194 (GAGKMS) coordinates NADP(+).

This sequence belongs to the glutamyl-tRNA reductase family. Homodimer.

The catalysed reaction is (S)-4-amino-5-oxopentanoate + tRNA(Glu) + NADP(+) = L-glutamyl-tRNA(Glu) + NADPH + H(+). Its pathway is porphyrin-containing compound metabolism; protoporphyrin-IX biosynthesis; 5-aminolevulinate from L-glutamyl-tRNA(Glu): step 1/2. The protein operates within porphyrin-containing compound metabolism; chlorophyll biosynthesis. Its function is as follows. Catalyzes the NADPH-dependent reduction of glutamyl-tRNA(Glu) to glutamate 1-semialdehyde (GSA). The polypeptide is Glutamyl-tRNA reductase (Acaryochloris marina (strain MBIC 11017)).